Reading from the N-terminus, the 81-residue chain is Styelin-E (81 aa).

The signal sequence occupies residues 1–22 (MQMKATILIVLVALFMIQQSEA). Trp-24 carries the 6'-bromotryptophan modification. Arg-26 bears the 3,4-dihydroxyarginine mark. Lys-27, Lys-30, and Lys-34 each carry 4,5-dihydroxylysine. 3',4'-dihydroxyphenylalanine occurs at positions 36 and 37. Lys-38 is modified (4,5-dihydroxylysine). The residue at position 40 (Lys-40) is a 5-hydroxylysine. Tyr-41 and Tyr-42 each carry 3',4'-dihydroxyphenylalanine. Lys-44 carries the 5-hydroxylysine modification. Leu-54 carries the post-translational modification Leucine amide. Residues 56 to 81 (DMTDEEFQDFMKEVEQAREEELQSRQ) constitute a propeptide, removed in mature form.

Post-translationally, contains L-DOPA (3',4'-dihydroxyphenylalanine). As to expression, hemocytes and pharyngeal tissues.

Its subcellular location is the secreted. Its function is as follows. Bactericidal against several Gram-positive and Gram-negative bacteria. In Styela clava (Sea squirt), this protein is Styelin-E.